A 523-amino-acid polypeptide reads, in one-letter code: 2-isopropylmalate synthase (523 aa).

Residues 5–267 form the Pyruvate carboxyltransferase domain; the sequence is VIIFDTTLRD…HTNINHHEIW (263 aa). Asp-14, His-202, His-204, and Asn-238 together coordinate Mn(2+). The regulatory domain stretch occupies residues 392–523; it reads RLDYFSVQSG…QNKENNKETV (132 aa).

This sequence belongs to the alpha-IPM synthase/homocitrate synthase family. LeuA type 1 subfamily. Homodimer. The cofactor is Mn(2+).

It localises to the cytoplasm. It carries out the reaction 3-methyl-2-oxobutanoate + acetyl-CoA + H2O = (2S)-2-isopropylmalate + CoA + H(+). The protein operates within amino-acid biosynthesis; L-leucine biosynthesis; L-leucine from 3-methyl-2-oxobutanoate: step 1/4. Functionally, catalyzes the condensation of the acetyl group of acetyl-CoA with 3-methyl-2-oxobutanoate (2-ketoisovalerate) to form 3-carboxy-3-hydroxy-4-methylpentanoate (2-isopropylmalate). This chain is 2-isopropylmalate synthase, found in Salmonella dublin (strain CT_02021853).